We begin with the raw amino-acid sequence, 459 residues long: Arginine biosynthesis bifunctional protein ArgJ, mitochondrial (459 aa).

6 residues coordinate substrate: T187, K216, T227, E314, N454, and T459. Residue T227 is the Nucleophile of the active site.

This sequence belongs to the ArgJ family. Heterodimer of an alpha and a beta chain. In terms of processing, the alpha and beta chains are autoproteolytically processed from a single precursor protein within the mitochondrion.

It is found in the mitochondrion matrix. The catalysed reaction is N(2)-acetyl-L-ornithine + L-glutamate = N-acetyl-L-glutamate + L-ornithine. The enzyme catalyses L-glutamate + acetyl-CoA = N-acetyl-L-glutamate + CoA + H(+). The protein operates within amino-acid biosynthesis; L-arginine biosynthesis; L-ornithine and N-acetyl-L-glutamate from L-glutamate and N(2)-acetyl-L-ornithine (cyclic): step 1/1. Its pathway is amino-acid biosynthesis; L-arginine biosynthesis; N(2)-acetyl-L-ornithine from L-glutamate: step 1/4. In terms of biological role, catalyzes two activities which are involved in the cyclic version of arginine biosynthesis: the synthesis of acetylglutamate from glutamate and acetyl-CoA, and of ornithine by transacetylation between acetylornithine and glutamate. In Uncinocarpus reesii (strain UAMH 1704), this protein is Arginine biosynthesis bifunctional protein ArgJ, mitochondrial.